A 957-amino-acid polypeptide reads, in one-letter code: Protein translocase subunit SecA (957 aa).

ATP is bound by residues glutamine 86, 104–108 (GEGKT), and aspartate 494. Residues 929-947 (SRPAPAPTAAASPDPSSAS) show a composition bias toward low complexity. The tract at residues 929–957 (SRPAPAPTAAASPDPSSASGVVEADFTEE) is disordered.

The protein belongs to the SecA family. Monomer and homodimer. Part of the essential Sec protein translocation apparatus which comprises SecA, SecYEG and auxiliary proteins SecDF. Other proteins may also be involved.

The protein resides in the cell inner membrane. Its subcellular location is the cellular thylakoid membrane. It is found in the cytoplasm. It catalyses the reaction ATP + H2O + cellular proteinSide 1 = ADP + phosphate + cellular proteinSide 2.. Its function is as follows. Part of the Sec protein translocase complex. Interacts with the SecYEG preprotein conducting channel. Has a central role in coupling the hydrolysis of ATP to the transfer of proteins into and across the cell membrane, serving as an ATP-driven molecular motor driving the stepwise translocation of polypeptide chains across the membrane. Probably participates in protein translocation into and across both the cytoplasmic and thylakoid membranes in cyanobacterial cells. This chain is Protein translocase subunit SecA, found in Synechococcus sp. (strain JA-2-3B'a(2-13)) (Cyanobacteria bacterium Yellowstone B-Prime).